The chain runs to 240 residues: Large ribosomal subunit protein uL2 (240 aa).

Residues 200-240 (HPFGGGGRQHPGKPKSISRNAPPGRKVGDIASKRTGRGGNE) are disordered.

Belongs to the universal ribosomal protein uL2 family. Part of the 50S ribosomal subunit. Forms a bridge to the 30S subunit in the 70S ribosome. Interacts weakly with protein L37Ae.

Functionally, one of the primary rRNA binding proteins. Required for association of the 30S and 50S subunits to form the 70S ribosome, for tRNA binding and peptide bond formation. It has been suggested to have peptidyltransferase activity; this is somewhat controversial. Makes several contacts with the 16S rRNA in the 70S ribosome. The chain is Large ribosomal subunit protein uL2 (rpl2) from Haloarcula marismortui (strain ATCC 43049 / DSM 3752 / JCM 8966 / VKM B-1809) (Halobacterium marismortui).